Consider the following 419-residue polypeptide: Octopressin receptor (419 aa).

The Extracellular segment spans residues 1 to 37 (MENFTEENLHPWITTTTRVYNNVTIFPQYDDELGKFE). Residues asparagine 3 and asparagine 22 are each glycosylated (N-linked (GlcNAc...) asparagine). Residues 38–58 (IMVLCILCFMALFGNAVVLIV) traverse the membrane as a helical segment. Topologically, residues 59-80 (LRIKKTTLTRMQLLIVYLSVTD) are cytoplasmic. A helical membrane pass occupies residues 81–101 (ISVALFHILPTIILKINVYFL). At 102–108 (GDISACR) the chain is on the extracellular side. A disulfide bridge connects residues cysteine 107 and cysteine 182. The chain crosses the membrane as a helical span at residues 109-129 (VYQFITVAELYASSFVLIVTA). Residues 130–153 (LDRYISICHPLAAHMWTNRRVHMT) are Cytoplasmic-facing. A helical transmembrane segment spans residues 154 to 174 (TALALFLALMCSLPQLDAVLV). The Extracellular segment spans residues 175–192 (DFHGGKLCRPNLTTELAN). A glycan (N-linked (GlcNAc...) asparagine) is linked at asparagine 185. A helical membrane pass occupies residues 193–213 (IAYSWWAFCSVFFVPLLLLIF). The Cytoplasmic segment spans residues 214 to 292 (FYGRICFVVW…VSKSKIKTIK (79 aa)). A disordered region spans residues 253-274 (SQTSSENRVKNYSDARDKDSSR). The segment covering 259–274 (NRVKNYSDARDKDSSR) has biased composition (basic and acidic residues). A helical membrane pass occupies residues 293–313 (LTFSVVACFIICYTPFFTVLM). The Extracellular segment spans residues 314–329 (ARTYDAELSSAQTPAL). The chain crosses the membrane as a helical span at residues 330–350 (VILSLLPSLNSCTNPWIYLAF). Residues 351–419 (SGKVWCRQQS…TTALMSSSPC (69 aa)) are Cytoplasmic-facing.

This sequence belongs to the G-protein coupled receptor 1 family. Vasopressin/oxytocin receptor subfamily. As to expression, present in the nervous system and peripheral tissues.

The protein resides in the cell membrane. Acts as a receptor for octopressin. This chain is Octopressin receptor, found in Octopus vulgaris (Common octopus).